The chain runs to 581 residues: Urease subunit alpha (581 aa).

The Urease domain maps to 134–581; the sequence is GGFDSHIHFI…LPMTQRYFLF (448 aa). Positions 139, 141, and 222 each coordinate Ni(2+). At Lys-222 the chain carries N6-carboxylysine. Residue His-224 participates in substrate binding. Ni(2+) contacts are provided by His-251 and His-277. His-325 functions as the Proton donor in the catalytic mechanism. Asp-365 is a Ni(2+) binding site.

This sequence belongs to the metallo-dependent hydrolases superfamily. Urease alpha subunit family. Heterotrimer of UreA (gamma), UreB (beta) and UreC (alpha) subunits. Three heterotrimers associate to form the active enzyme. Requires Ni cation as cofactor. Post-translationally, carboxylation allows a single lysine to coordinate two nickel ions.

It localises to the cytoplasm. The catalysed reaction is urea + 2 H2O + H(+) = hydrogencarbonate + 2 NH4(+). It functions in the pathway nitrogen metabolism; urea degradation; CO(2) and NH(3) from urea (urease route): step 1/1. This chain is Urease subunit alpha, found in Albidiferax ferrireducens (strain ATCC BAA-621 / DSM 15236 / T118) (Rhodoferax ferrireducens).